Consider the following 432-residue polypeptide: Malate dehydrogenase [NADP], chloroplastic (432 aa).

The N-terminal 40 residues, 1 to 40 (MGLSTVYSPAGPRLVPAPLGRCRSAQPRRPRRAPLATVRC), are a transit peptide targeting the chloroplast. Positions 18 to 37 (PLGRCRSAQPRRPRRAPLAT) are disordered. A disulfide bridge links Cys-67 with Cys-72. 96–102 (GAAGMIS) contributes to the NADP(+) binding site. Substrate contacts are provided by Arg-177 and Arg-183. Asn-190 contacts NADP(+). Position 197 (Gln-197) interacts with NAD(+). An NADP(+)-binding site is contributed by 214 to 216 (VGN). Substrate is bound by residues Asn-216 and Arg-247. Catalysis depends on His-272, which acts as the Proton acceptor. Cys-408 and Cys-420 are oxidised to a cystine.

The protein belongs to the LDH/MDH superfamily. MDH type 2 family. Homodimer.

The protein resides in the plastid. It is found in the chloroplast. The enzyme catalyses (S)-malate + NADP(+) = oxaloacetate + NADPH + H(+). Its activity is regulated as follows. Chloroplast NADP-MDH is activated upon illumination. In order to be enzymatically active, disulfide bridges on the protein must be reduced by thioredoxin which receives electrons from ferredoxin and the electron transport system of photosynthesis. Its function is as follows. The chloroplastic, NADP-dependent form is essential for the photosynthesis C4 cycle, which allows plants to circumvent the problem of photorespiration. In C4 plants, NADP-MDH activity acts to convert oxaloacetate to malate in chloroplasts of mesophyll cells for transport to the bundle sheath cells. The protein is Malate dehydrogenase [NADP], chloroplastic of Zea mays (Maize).